Consider the following 529-residue polypeptide: Lysine--tRNA ligase (529 aa).

Residues 44-52 carry the 'HIGH' region motif; that stretch reads PSGLPHIGT. Positions 290-294 match the 'KMSKS' region motif; it reads KISKS. Lysine 293 is a binding site for ATP.

The protein belongs to the class-I aminoacyl-tRNA synthetase family.

The protein localises to the cytoplasm. It catalyses the reaction tRNA(Lys) + L-lysine + ATP = L-lysyl-tRNA(Lys) + AMP + diphosphate. This chain is Lysine--tRNA ligase, found in Rickettsia akari (strain Hartford).